We begin with the raw amino-acid sequence, 234 residues long: Zein-alpha 19B1 (234 aa).

Residues 1 to 21 (MAAKIFCLLMLLGLSASAATA) form the signal peptide.

The protein belongs to the zein family.

Zeins are major seed storage proteins. The chain is Zein-alpha 19B1 from Zea mays (Maize).